The following is a 240-amino-acid chain: MSQKPTSHPYKPNMTQDELKALVGQAALPYVEPGSIVGVGTGSTVNKFIDALATMKDRIAGAVSSSVASTERLQAIGIKVFDATEVDELAVYIDGADEIDHAGYMIKGGGAALTREKIVAAQSRKFVCIADESKLVQTLGSFPLPVEVIPMAARRIARQFAALGGTATLRSKGGAESGEPLVTDNGQHILDVTGLKITDPLGFESQVNQWPGVVTVGVFAFQKAHVCLLGASDGVRTLVF.

Residues 41-44, 94-97, and 107-110 contribute to the substrate site; these read TGST, DGAD, and KGGG. E116 serves as the catalytic Proton acceptor. K134 is a binding site for substrate.

The protein belongs to the ribose 5-phosphate isomerase family. As to quaternary structure, homodimer.

It catalyses the reaction aldehydo-D-ribose 5-phosphate = D-ribulose 5-phosphate. The protein operates within carbohydrate degradation; pentose phosphate pathway; D-ribose 5-phosphate from D-ribulose 5-phosphate (non-oxidative stage): step 1/1. Its function is as follows. Catalyzes the reversible conversion of ribose-5-phosphate to ribulose 5-phosphate. This chain is Ribose-5-phosphate isomerase A, found in Polaromonas sp. (strain JS666 / ATCC BAA-500).